A 132-amino-acid chain; its full sequence is MKRLLPSLRTKKRYLAFELISEEPAGRGDIVKEVISSASSLLGDITTSDCDIRVLGFEAGKGIIQCSHTRVKETRAALATLTRVNGKRATLHVLGASGTVKKATEKFLKDYTVFEPEIHEKRDSRKTPGKVD.

The protein belongs to the eukaryotic/archaeal RNase P protein component 2 family. Consists of a catalytic RNA component and at least 4-5 protein subunits.

It is found in the cytoplasm. It catalyses the reaction Endonucleolytic cleavage of RNA, removing 5'-extranucleotides from tRNA precursor.. Functionally, part of ribonuclease P, a protein complex that generates mature tRNA molecules by cleaving their 5'-ends. This chain is Ribonuclease P protein component 2, found in Methanosarcina acetivorans (strain ATCC 35395 / DSM 2834 / JCM 12185 / C2A).